The following is a 558-amino-acid chain: Pentatricopeptide repeat-containing protein At1g06140, mitochondrial (558 aa).

A mitochondrion-targeting transit peptide spans methionine 1 to leucine 79. PPR repeat units lie at residues glutamate 38–tryptophan 68, asparagine 71–histidine 103, aspartate 108–lysine 142, aspartate 143–arginine 173, asparagine 174–leucine 208, aspartate 209–aspartate 243, serine 245–arginine 275, asparagine 276–proline 310, asparagine 311–methionine 345, aspartate 346–arginine 376, asparagine 377–proline 411, asparagine 412–proline 447, and glutamate 448–serine 482. Residues alanine 483–glycine 558 form a type E motif region.

It belongs to the PPR family. PCMP-E subfamily.

It is found in the mitochondrion. This chain is Pentatricopeptide repeat-containing protein At1g06140, mitochondrial (PCMP-E61), found in Arabidopsis thaliana (Mouse-ear cress).